Reading from the N-terminus, the 252-residue chain is MGISLIGVEGMPLVGAGDDIAYLIISALNEGGEDLLDGDIIVIAETIVSKAEGNIISLEEIKPSPEALDIAERTGKDPSLVEAILGESSEIIRVGHDFIVSETRHGFVCANAGIDESNVDDGLATPLPRDPDGSAEKILRTLQEATGRELAVIISDTQGRPFREGAVGVAVGVAGLSPIWDRKGERDLYGRSLETTRVAVADELAAAASLVMGQADEGVPAVIIRGYPWGHLRSDGGVKPLLRPRELDVFRG.

GTP is bound by residues 11-14 (MPLV), 45-46 (ET), and lysine 50. Aspartate 115 contributes to the a divalent metal cation binding site. Asparagine 118 provides a ligand contact to GTP. The a divalent metal cation site is built by aspartate 156, threonine 157, and glutamine 214. A GTP-binding site is contributed by 212–219 (MGQADEGV).

The protein belongs to the CofE family. Homodimer. Requires Mg(2+) as cofactor. The cofactor is Mn(2+). K(+) is required as a cofactor.

The enzyme catalyses oxidized coenzyme F420-0 + GTP + L-glutamate = oxidized coenzyme F420-1 + GDP + phosphate + H(+). It catalyses the reaction oxidized coenzyme F420-1 + GTP + L-glutamate = oxidized coenzyme F420-2 + GDP + phosphate + H(+). It participates in cofactor biosynthesis; coenzyme F420 biosynthesis. In terms of biological role, catalyzes the GTP-dependent successive addition of two or more gamma-linked L-glutamates to the L-lactyl phosphodiester of 7,8-didemethyl-8-hydroxy-5-deazariboflavin (F420-0) to form coenzyme F420-0-glutamyl-glutamate (F420-2) or polyglutamated F420 derivatives. The polypeptide is Coenzyme F420:L-glutamate ligase (Methanothermobacter thermautotrophicus (strain ATCC 29096 / DSM 1053 / JCM 10044 / NBRC 100330 / Delta H) (Methanobacterium thermoautotrophicum)).